Here is a 493-residue protein sequence, read N- to C-terminus: Probable cytochrome P450 6a13 (493 aa).

Residue Cys435 participates in heme binding.

Belongs to the cytochrome P450 family. Heme is required as a cofactor.

The protein resides in the endoplasmic reticulum membrane. It localises to the microsome membrane. Functionally, may be involved in the metabolism of insect hormones and in the breakdown of synthetic insecticides. This is Probable cytochrome P450 6a13 (Cyp6a13) from Drosophila melanogaster (Fruit fly).